Here is a 312-residue protein sequence, read N- to C-terminus: Acetaldehyde dehydrogenase 4 (312 aa).

Residue 12-15 (SGNI) coordinates NAD(+). The Acyl-thioester intermediate role is filled by cysteine 132. NAD(+)-binding positions include 163 to 171 (SAGPGTRAN) and asparagine 290.

The protein belongs to the acetaldehyde dehydrogenase family.

The catalysed reaction is acetaldehyde + NAD(+) + CoA = acetyl-CoA + NADH + H(+). The chain is Acetaldehyde dehydrogenase 4 from Azotobacter vinelandii (strain DJ / ATCC BAA-1303).